The primary structure comprises 318 residues: N-succinylornithine carbamoyltransferase (318 aa).

Carbamoyl phosphate is bound by residues 47 to 50, Trp75, and Arg110; that span reads SLRT. Glu142 provides a ligand contact to N(2)-succinyl-L-ornithine. 147–150 provides a ligand contact to carbamoyl phosphate; sequence HPLQ. N(2)-succinyl-L-ornithine contacts are provided by His176 and Lys236. Residue 274-275 coordinates carbamoyl phosphate; that stretch reads CL. Arg278 is a binding site for N(2)-succinyl-L-ornithine. Arg302 contacts carbamoyl phosphate.

The protein belongs to the aspartate/ornithine carbamoyltransferase superfamily. SOTCase family. Homotrimer.

The catalysed reaction is N(2)-succinyl-L-ornithine + carbamoyl phosphate = N(2)-succinyl-L-citrulline + phosphate + H(+). It participates in amino-acid biosynthesis; L-arginine biosynthesis. Functionally, catalyzes the transfer of the carbamoyl group from carbamoyl phosphate to the delta-amino group of N(2)-succinyl-L-ornithine to produce N(2)-succinyl-L-citrulline. Is essential for arginine biosynthesis. Has no activity with either L-ornithine or L-aspartate as substrate. Also has no detectable AOTCase activity, being unable to convert N(2)-acetyl-L-ornithine to N(2)-acetyl-L-citrulline. This Bacteroides fragilis (strain 638R) protein is N-succinylornithine carbamoyltransferase.